Consider the following 228-residue polypeptide: 2,3-bisphosphoglycerate-dependent phosphoglycerate mutase (228 aa).

Residues arginine 7 to asparagine 14, threonine 20 to glycine 21, arginine 59, glutamate 86 to tyrosine 89, lysine 97, arginine 113 to arginine 114, and glycine 182 to asparagine 183 contribute to the substrate site. Catalysis depends on histidine 8, which acts as the Tele-phosphohistidine intermediate. The active-site Proton donor/acceptor is the glutamate 86.

This sequence belongs to the phosphoglycerate mutase family. BPG-dependent PGAM subfamily.

It carries out the reaction (2R)-2-phosphoglycerate = (2R)-3-phosphoglycerate. Its pathway is carbohydrate degradation; glycolysis; pyruvate from D-glyceraldehyde 3-phosphate: step 3/5. Its function is as follows. Catalyzes the interconversion of 2-phosphoglycerate and 3-phosphoglycerate. The chain is 2,3-bisphosphoglycerate-dependent phosphoglycerate mutase from Fusobacterium nucleatum subsp. nucleatum (strain ATCC 25586 / DSM 15643 / BCRC 10681 / CIP 101130 / JCM 8532 / KCTC 2640 / LMG 13131 / VPI 4355).